The following is a 542-amino-acid chain: Chaperonin GroEL (542 aa).

Residues 29 to 32 (TLGP), 86 to 90 (DGTTT), Gly-413, 477 to 479 (NAA), and Asp-493 contribute to the ATP site.

The protein belongs to the chaperonin (HSP60) family. Forms a cylinder of 14 subunits composed of two heptameric rings stacked back-to-back. Interacts with the co-chaperonin GroES.

The protein resides in the cytoplasm. It catalyses the reaction ATP + H2O + a folded polypeptide = ADP + phosphate + an unfolded polypeptide.. Functionally, together with its co-chaperonin GroES, plays an essential role in assisting protein folding. The GroEL-GroES system forms a nano-cage that allows encapsulation of the non-native substrate proteins and provides a physical environment optimized to promote and accelerate protein folding. The polypeptide is Chaperonin GroEL (Beutenbergia cavernae (strain ATCC BAA-8 / DSM 12333 / CCUG 43141 / JCM 11478 / NBRC 16432 / NCIMB 13614 / HKI 0122)).